Here is a 292-residue protein sequence, read N- to C-terminus: Probable 2-(5''-triphosphoribosyl)-3'-dephosphocoenzyme-A synthase (292 aa).

It belongs to the CitG/MdcB family.

The enzyme catalyses 3'-dephospho-CoA + ATP = 2'-(5''-triphospho-alpha-D-ribosyl)-3'-dephospho-CoA + adenine. This chain is Probable 2-(5''-triphosphoribosyl)-3'-dephosphocoenzyme-A synthase, found in Shigella flexneri serotype 5b (strain 8401).